The chain runs to 103 residues: Large ribosomal subunit protein bL21 (103 aa).

Belongs to the bacterial ribosomal protein bL21 family. As to quaternary structure, part of the 50S ribosomal subunit. Contacts protein L20.

In terms of biological role, this protein binds to 23S rRNA in the presence of protein L20. The polypeptide is Large ribosomal subunit protein bL21 (Psychrobacter arcticus (strain DSM 17307 / VKM B-2377 / 273-4)).